A 62-amino-acid chain; its full sequence is Omega-lycotoxin-Am1e (62 aa).

Positions 1–15 are excised as a propeptide; the sequence is EDEVEETLPVAEEGR. Intrachain disulfides connect C19–C34, C26–C39, C33–C59, and C41–C57.

The protein belongs to the neurotoxin omega-lctx family. As to expression, expressed by the venom gland.

It is found in the secreted. Its function is as follows. Modulates Cav2.1/CACNA1A voltage-gated calcium channels (P/Q-type currents) in rat cerebellar Purkinje cells and hippocampal CA1-CA3 neurons. At saturating concentrations (&gt;10 nM) decelerates activation kinetics and slightly increases peak amplitude without affecting deactivation kinetics. In vivo, does not cause death when intravenously injected into mice. In rat models, through its activity on Cav2.1/CACNA1A, has an ameliorative effect on memory defects provoked by hyperstimulation of N-methyl-D-aspartate receptors (NMDARs) in the hippocampus. This Alopecosa marikovskyi (Wolf spider) protein is Omega-lycotoxin-Am1e.